The primary structure comprises 184 residues: Probable chemoreceptor glutamine deamidase CheD (184 aa).

This sequence belongs to the CheD family.

It catalyses the reaction L-glutaminyl-[protein] + H2O = L-glutamyl-[protein] + NH4(+). Its function is as follows. Probably deamidates glutamine residues to glutamate on methyl-accepting chemotaxis receptors (MCPs), playing an important role in chemotaxis. This Rhizobium johnstonii (strain DSM 114642 / LMG 32736 / 3841) (Rhizobium leguminosarum bv. viciae) protein is Probable chemoreceptor glutamine deamidase CheD.